A 269-amino-acid polypeptide reads, in one-letter code: Shikimate dehydrogenase (NADP(+)) (269 aa).

Shikimate contacts are provided by residues 17-19 (SKS) and Thr64. Lys68 serves as the catalytic Proton acceptor. Asp80 is an NADP(+) binding site. Shikimate is bound by residues Asn89 and Asp105. NADP(+) is bound by residues 130 to 134 (GAGGA), 154 to 159 (NRTRAK), and Met213. Tyr215 lines the shikimate pocket. Gly237 is an NADP(+) binding site.

It belongs to the shikimate dehydrogenase family. As to quaternary structure, homodimer.

It carries out the reaction shikimate + NADP(+) = 3-dehydroshikimate + NADPH + H(+). It functions in the pathway metabolic intermediate biosynthesis; chorismate biosynthesis; chorismate from D-erythrose 4-phosphate and phosphoenolpyruvate: step 4/7. Its function is as follows. Involved in the biosynthesis of the chorismate, which leads to the biosynthesis of aromatic amino acids. Catalyzes the reversible NADPH linked reduction of 3-dehydroshikimate (DHSA) to yield shikimate (SA). The protein is Shikimate dehydrogenase (NADP(+)) of Neisseria gonorrhoeae (strain ATCC 700825 / FA 1090).